The following is a 2292-amino-acid chain: Protein Ycf2 (2292 aa).

1640 to 1647 lines the ATP pocket; the sequence is GSIGIGRS.

This sequence belongs to the Ycf2 family.

It is found in the plastid. Its subcellular location is the chloroplast stroma. In terms of biological role, probable ATPase of unknown function. Its presence in a non-photosynthetic plant (Epifagus virginiana) and experiments in tobacco indicate that it has an essential function which is probably not related to photosynthesis. This is Protein Ycf2 from Liriodendron tulipifera (Tuliptree).